Here is a 2319-residue protein sequence, read N- to C-terminus: Neurogenic locus notch homolog protein 3 (2319 aa).

Basic residues predominate over residues 1–14; the sequence is MGPGARGRRRRRRL. A disordered region spans residues 1-20; sequence MGPGARGRRRRRRLMALPPP. The first 40 residues, 1–40, serve as a signal peptide directing secretion; the sequence is MGPGARGRRRRRRLMALPPPPPPMRALPLLLLLLAGLGAA. 3 consecutive EGF-like domains span residues 41–79, 80–120, and 121–158; these read APPC…ERCQ, LEDP…PDCS, and LPDP…RNCR. The Extracellular portion of the chain corresponds to 41–1645; sequence APPCLDGSPC…LEPPEQSVPL (1605 aa). Intrachain disulfides connect Cys-44–Cys-56, Cys-50–Cys-67, Cys-69–Cys-78, Cys-84–Cys-95, Cys-89–Cys-108, Cys-110–Cys-119, Cys-125–Cys-136, Cys-130–Cys-146, Cys-148–Cys-157, Cys-164–Cys-176, Cys-170–Cys-185, Cys-187–Cys-196, Cys-203–Cys-214, Cys-208–Cys-224, Cys-226–Cys-235, Cys-242–Cys-253, Cys-247–Cys-262, Cys-264–Cys-273, Cys-280–Cys-293, Cys-287–Cys-302, Cys-304–Cys-313, Cys-320–Cys-331, Cys-325–Cys-340, Cys-342–Cys-351, Cys-357–Cys-368, Cys-362–Cys-379, Cys-381–Cys-390, Cys-397–Cys-410, Cys-404–Cys-419, Cys-421–Cys-430, Cys-437–Cys-448, Cys-442–Cys-457, Cys-459–Cys-468, Cys-475–Cys-486, Cys-480–Cys-495, Cys-497–Cys-506, Cys-513–Cys-524, Cys-518–Cys-533, Cys-535–Cys-544, Cys-551–Cys-561, Cys-556–Cys-570, Cys-572–Cys-581, Cys-588–Cys-599, Cys-593–Cys-608, Cys-610–Cys-619, Cys-626–Cys-636, Cys-631–Cys-645, Cys-647–Cys-656, Cys-663–Cys-674, Cys-668–Cys-683, Cys-685–Cys-694, Cys-701–Cys-711, Cys-706–Cys-720, Cys-722–Cys-731, Cys-740–Cys-751, Cys-745–Cys-760, Cys-762–Cys-771, Cys-777–Cys-788, Cys-782–Cys-798, Cys-800–Cys-809, Cys-816–Cys-828, Cys-822–Cys-837, Cys-839–Cys-848, Cys-855–Cys-866, Cys-860–Cys-875, Cys-877–Cys-886, Cys-893–Cys-903, Cys-898–Cys-912, Cys-914–Cys-923, Cys-930–Cys-941, Cys-935–Cys-950, Cys-952–Cys-961, Cys-968–Cys-979, Cys-973–Cys-988, Cys-990–Cys-999, Cys-1006–Cys-1017, Cys-1011–Cys-1024, Cys-1026–Cys-1035, Cys-1042–Cys-1063, Cys-1057–Cys-1072, Cys-1074–Cys-1083, Cys-1090–Cys-1101, Cys-1095–Cys-1110, Cys-1112–Cys-1121, Cys-1128–Cys-1139, Cys-1133–Cys-1148, Cys-1150–Cys-1159, Cys-1166–Cys-1184, Cys-1178–Cys-1193, Cys-1195–Cys-1204, Cys-1211–Cys-1224, Cys-1216–Cys-1234, Cys-1236–Cys-1245, Cys-1252–Cys-1263, Cys-1257–Cys-1277, Cys-1279–Cys-1288, Cys-1295–Cys-1306, Cys-1300–Cys-1315, and Cys-1317–Cys-1326. Positions 160-197 constitute an EGF-like 4; calcium-binding domain; the sequence is DIDECRAGASCRHGGTCINTPGSFHCLCPLGYTGLLCE. The region spanning 199–236 is the EGF-like 5 domain; the sequence is PIVPCAPSPCRNGGTCRQSSDVTYDCACLPGFEGQNCE. The region spanning 238-274 is the EGF-like 6; calcium-binding domain; sequence NVDDCPGHRCLNGGTCVDGVNTYNCQCPPEWTGQFCT. One can recognise an EGF-like 7 domain in the interval 276 to 314; it reads DVDECQLQPNACHNGGTCFNLLGGHSCVCVNGWTGESCS. One can recognise an EGF-like 8; calcium-binding domain in the interval 316-352; it reads NIDDCATAVCFHGATCHDRVASFYCACPMGKTGLLCH. Residues 353 to 391 form the EGF-like 9 domain; that stretch reads LDDACVSNPCHEDAICDTNPVSGRAICTCPPGFTGGACD. Positions 393 to 431 constitute an EGF-like 10; calcium-binding domain; that stretch reads DVDECSIGANPCEHLGRCVNTQGSFLCQCGRGYTGPRCE. Residues 433–469 form the EGF-like 11; calcium-binding domain; it reads DVNECLSGPCRNQATCLDRIGQFTCICMAGFTGTFCE. The 37-residue stretch at 471–507 folds into the EGF-like 12; calcium-binding domain; the sequence is DIDECQSSPCVNGGVCKDRVNGFSCTCPSGFSGSTCQ. In terms of domain architecture, EGF-like 13; calcium-binding spans 509 to 545; the sequence is DVDECASTPCRNGAKCVDQPDGYECRCAEGFEGTLCE. Residues 547–582 form the EGF-like 14; calcium-binding domain; the sequence is NVDDCSPDPCHHGRCVDGIASFSCACAPGYTGIRCE. Residues 584 to 620 form the EGF-like 15; calcium-binding domain; that stretch reads QVDECRSQPCRYGGKCLDLVDKYLCRCPPGTTGVNCE. Residues 622–657 enclose the EGF-like 16; calcium-binding domain; the sequence is NIDDCASNPCTFGVCRDGINRYDCVCQPGFTGPLCN. Residues 659-695 enclose the EGF-like 17; calcium-binding domain; the sequence is EINECASSPCGEGGSCVDGENGFHCLCPPGSLPPLCL. 3 EGF-like domains span residues 697 to 732, 736 to 772, and 773 to 810; these read ANHP…PRCS, APDA…HQCE, and VLSP…PRCQ. Residues 812–849 enclose the EGF-like 21; calcium-binding domain; the sequence is DVDECAGASPCGPHGTCTNLPGSFRCICHGGYTGPFCD. An EGF-like 22; calcium-binding domain is found at 851-887; it reads DIDDCDPNPCLNGGSCQDGVGSFSCSCLSGFAGPRCA. The 36-residue stretch at 889–924 folds into the EGF-like 23; calcium-binding domain; sequence DVDECLSSPCGPGTCTDHVASFTCTCPPGYGGFHCE. EGF-like domains are found at residues 926–962, 964–1000, 1002–1036, 1038–1084, and 1086–1122; these read DLLD…THCQ, KVDP…NQCQ, PVDW…PLCD, PSLP…SHCE, and EVDP…DSCE. An EGF-like 29; calcium-binding domain is found at 1124–1160; that stretch reads DVDECASQPCQNGGSCIDLVAHYLCSCPPGTLGVLCE. Positions 1162 to 1205 constitute an EGF-like 30; calcium-binding domain; the sequence is NEDDCGPGPSLDSGLRCLHNGTCVDLVGGFRCNCPPGYTGLHCE. A glycan (N-linked (GlcNAc...) asparagine) is linked at Asn-1181. EGF-like domains follow at residues 1207 to 1246, 1248 to 1289, 1291 to 1327, and 1337 to 1375; these read DINE…PRCQ, ALFP…LRCE, VARS…PSCR, and TNTS…PRCE. Asn-1338 is a glycosylation site (N-linked (GlcNAc...) asparagine). 12 disulfides stabilise this stretch: Cys-1341–Cys-1352, Cys-1346–Cys-1363, Cys-1365–Cys-1374, Cys-1389–Cys-1412, Cys-1394–Cys-1407, Cys-1403–Cys-1419, Cys-1430–Cys-1453, Cys-1435–Cys-1448, Cys-1444–Cys-1460, Cys-1469–Cys-1495, Cys-1477–Cys-1490, and Cys-1486–Cys-1502. LNR repeat units lie at residues 1389–1429, 1430–1467, and 1469–1507; these read CPRA…PWRQ, CEAL…GRDR, and CNPV…SEVP. An N-linked (GlcNAc...) asparagine glycan is attached at Asn-1440. A helical transmembrane segment spans residues 1646 to 1666; that stretch reads LPLLVAGAVFLLVIFVLGVMV. Residues 1667-2319 lie on the Cytoplasmic side of the membrane; it reads ARRKREHSTL…EVTPKRQVMA (653 aa). ANK repeat units lie at residues 1840–1869, 1873–1903, 1907–1936, 1940–1969, and 1973–2002; these read TGET…DTNA, SGRT…DLDA, DGST…DVNA, LGKS…NKDM, and KEET…NREI. Disordered regions lie at residues 2026–2046 and 2059–2129; these read LDQP…PLLC and QSGT…EGPY. Residues 2029–2046 are compositionally biased toward low complexity; the sequence is PSGPRSPSGPHGLGPLLC. Position 2175 is an omega-N-methylarginine (Arg-2175). Residues 2197–2319 are disordered; sequence LNPATPVSPH…EVTPKRQVMA (123 aa). Residues 2263 to 2288 show a composition bias toward low complexity; it reads SLSDWSDSTPSPATATSATAAGALPA. Polar residues predominate over residues 2297-2306; it reads SLPQSQTQLG.

This sequence belongs to the NOTCH family. As to quaternary structure, heterodimer of a C-terminal fragment N(TM) and a N-terminal fragment N(EC) which are probably linked by disulfide bonds. Interacts with MAML1, MAML2 and MAML3 which act as transcriptional coactivators for NOTCH3. Interacts with PSMA1. Interacts with HIF1AN. Post-translationally, synthesized in the endoplasmic reticulum as an inactive form which is proteolytically cleaved by a furin-like convertase in the trans-Golgi network before it reaches the plasma membrane to yield an active, ligand-accessible form. Cleavage results in a C-terminal fragment N(TM) and a N-terminal fragment N(EC). Following ligand binding, it is cleaved by TNF-alpha converting enzyme (TACE) to yield a membrane-associated intermediate fragment called notch extracellular truncation (NEXT). This fragment is then cleaved by presenilin dependent gamma-secretase to release a notch-derived peptide containing the intracellular domain (NICD) from the membrane. Phosphorylated. In terms of processing, hydroxylated by HIF1AN. Expressed in postnatal central nervous system (CNS) germinal zones and, in early postnatal life, within numerous cells throughout the CNS. It is more highly localized to ventricular germinal zones.

It localises to the cell membrane. It is found in the nucleus. Functions as a receptor for membrane-bound ligands Jagged1, Jagged2 and Delta1 to regulate cell-fate determination. Upon ligand activation through the released notch intracellular domain (NICD) it forms a transcriptional activator complex with RBPJ/RBPSUH and activates genes of the enhancer of split locus. Affects the implementation of differentiation, proliferation and apoptotic programs. Acts instructively to control the cell fate determination of CNS multipotent progenitor cells, resulting in astroglial induction and neuron/oligodendrocyte suppression. The protein is Neurogenic locus notch homolog protein 3 (Notch3) of Rattus norvegicus (Rat).